The primary structure comprises 83 residues: Arminin 3a (83 aa).

A signal peptide spans 1-18 (MKTVFAILFLTFIALTCA). The propeptide occupies 19–57 (RNYEDLKEKIKNEVEREIFEDLEEESDELENNFKKFNDA). Position 80 is an alanine amide (alanine 80).

The protein belongs to the arminin family. As to expression, expressed in entodermal epithelium along the body column.

The protein localises to the secreted. It is found in the target cell membrane. Antimicrobial peptide with a broad-spectrum antimicrobial activity. Keeps its antibacterial activity under a wide range of salt concentrations that mimic physiological conditions of human blood, which is surprising, since Hydra is an obligate freshwater animal with nearly no salt tolerance. Does not affect red blood cells. In Hydra vulgaris (Hydra), this protein is Arminin 3a.